Here is a 276-residue protein sequence, read N- to C-terminus: D-aminoacyl-tRNA deacylase (276 aa).

Belongs to the DtdA deacylase family. In terms of assembly, monomer. Zn(2+) is required as a cofactor.

It carries out the reaction a D-aminoacyl-tRNA + H2O = a tRNA + a D-alpha-amino acid + H(+). The catalysed reaction is glycyl-tRNA(Ala) + H2O = tRNA(Ala) + glycine + H(+). Functionally, D-aminoacyl-tRNA deacylase with broad substrate specificity. By recycling D-aminoacyl-tRNA to D-amino acids and free tRNA molecules, this enzyme counteracts the toxicity associated with the formation of D-aminoacyl-tRNA entities in vivo. In Korarchaeum cryptofilum (strain OPF8), this protein is D-aminoacyl-tRNA deacylase.